A 67-amino-acid polypeptide reads, in one-letter code: Conotoxin Cl6.7 (67 aa).

An N-terminal signal peptide occupies residues 1 to 24; that stretch reads MKVTAVLMVAVLVLTACQLTTANT. Residues 25–39 constitute a propeptide that is removed on maturation; it reads TDYVRRIPARKSTMS. Intrachain disulfides connect C43-C58, C50-C62, and C57-C66.

The protein belongs to the conotoxin O1 superfamily. As to expression, expressed by the venom duct.

Its subcellular location is the secreted. This Californiconus californicus (California cone) protein is Conotoxin Cl6.7.